Here is a 217-residue protein sequence, read N- to C-terminus: 3,4-dihydroxy-2-butanone 4-phosphate synthase (217 aa).

D-ribulose 5-phosphate-binding positions include 37 to 38 (RE), Asp42, 150 to 154 (RRGHT), and Glu174. Residue Glu38 coordinates Mg(2+). Position 153 (His153) interacts with Mg(2+).

This sequence belongs to the DHBP synthase family. As to quaternary structure, homodimer. The cofactor is Mg(2+). Mn(2+) serves as cofactor.

The enzyme catalyses D-ribulose 5-phosphate = (2S)-2-hydroxy-3-oxobutyl phosphate + formate + H(+). It functions in the pathway cofactor biosynthesis; riboflavin biosynthesis; 2-hydroxy-3-oxobutyl phosphate from D-ribulose 5-phosphate: step 1/1. Functionally, catalyzes the conversion of D-ribulose 5-phosphate to formate and 3,4-dihydroxy-2-butanone 4-phosphate. The chain is 3,4-dihydroxy-2-butanone 4-phosphate synthase from Aeromonas salmonicida (strain A449).